We begin with the raw amino-acid sequence, 230 residues long: Geranylgeranylglyceryl phosphate synthase (230 aa).

Lys13 lines the sn-glycerol 1-phosphate pocket. Positions 15 and 41 each coordinate Mg(2+). Residues 161–166 (YIEYSG), Gly191, and 211–212 (GN) contribute to the sn-glycerol 1-phosphate site.

It belongs to the GGGP/HepGP synthase family. Group I subfamily. Mg(2+) serves as cofactor.

Its subcellular location is the cytoplasm. It carries out the reaction sn-glycerol 1-phosphate + (2E,6E,10E)-geranylgeranyl diphosphate = sn-3-O-(geranylgeranyl)glycerol 1-phosphate + diphosphate. Its pathway is membrane lipid metabolism; glycerophospholipid metabolism. Its function is as follows. Prenyltransferase that catalyzes the transfer of the geranylgeranyl moiety of geranylgeranyl diphosphate (GGPP) to the C3 hydroxyl of sn-glycerol-1-phosphate (G1P). This reaction is the first ether-bond-formation step in the biosynthesis of archaeal membrane lipids. This is Geranylgeranylglyceryl phosphate synthase from Methanoculleus marisnigri (strain ATCC 35101 / DSM 1498 / JR1).